Here is a 434-residue protein sequence, read N- to C-terminus: Putative ankyrin repeat protein FPV023 (434 aa).

ANK repeat units lie at residues 33–62 (RLKI…DPVA), 134–163 (LTIS…DINF), 167–197 (IGNT…DINI), 201–230 (YGTT…DPNS), 236–265 (IGTK…DPNI), 269–299 (AGVT…DPNI), and 303–330 (NGTT…DINI).

This is Putative ankyrin repeat protein FPV023 from Fowlpox virus (strain NVSL) (FPV).